Reading from the N-terminus, the 71-residue chain is ATP synthase F(0) complex subunit e, mitochondrial (71 aa).

Lysine 34 carries the N6-acetyllysine modification. A Phosphoserine modification is found at serine 68.

This sequence belongs to the ATPase e subunit family. Component of the ATP synthase complex composed at least of ATP5F1A/subunit alpha, ATP5F1B/subunit beta, ATP5MC1/subunit c (homooctomer), MT-ATP6/subunit a, MT-ATP8/subunit 8, ATP5ME/subunit e, ATP5MF/subunit f, ATP5MG/subunit g, ATP5MK/subunit k, ATP5MJ/subunit j, ATP5F1C/subunit gamma, ATP5F1D/subunit delta, ATP5F1E/subunit epsilon, ATP5PF/subunit F6, ATP5PB/subunit b, ATP5PD/subunit d, ATP5PO/subunit OSCP. ATP synthase complex consists of a soluble F(1) head domain (subunits alpha(3) and beta(3)) - the catalytic core - and a membrane F(0) domain - the membrane proton channel (subunits c, a, 8, e, f, g, k and j). These two domains are linked by a central stalk (subunits gamma, delta, and epsilon) rotating inside the F1 region and a stationary peripheral stalk (subunits F6, b, d, and OSCP). As to expression, mammary gland, liver, kidney, heart, spleen, brain and lung.

The protein resides in the mitochondrion. Its subcellular location is the mitochondrion inner membrane. Its function is as follows. Subunit e, of the mitochondrial membrane ATP synthase complex (F(1)F(0) ATP synthase or Complex V) that produces ATP from ADP in the presence of a proton gradient across the membrane which is generated by electron transport complexes of the respiratory chain. ATP synthase complex consist of a soluble F(1) head domain - the catalytic core - and a membrane F(1) domain - the membrane proton channel. These two domains are linked by a central stalk rotating inside the F(1) region and a stationary peripheral stalk. During catalysis, ATP synthesis in the catalytic domain of F(1) is coupled via a rotary mechanism of the central stalk subunits to proton translocation. In vivo, can only synthesize ATP although its ATP hydrolase activity can be activated artificially in vitro. Part of the complex F(0) domain. The chain is ATP synthase F(0) complex subunit e, mitochondrial from Mus musculus (Mouse).